The chain runs to 362 residues: UDP-N-acetylglucosamine--N-acetylmuramyl-(pentapeptide) pyrophosphoryl-undecaprenol N-acetylglucosamine transferase (362 aa).

UDP-N-acetyl-alpha-D-glucosamine is bound by residues R166, S196, and Q290.

This sequence belongs to the glycosyltransferase 28 family. MurG subfamily.

The protein resides in the cell membrane. The enzyme catalyses Mur2Ac(oyl-L-Ala-gamma-D-Glu-L-Lys-D-Ala-D-Ala)-di-trans,octa-cis-undecaprenyl diphosphate + UDP-N-acetyl-alpha-D-glucosamine = beta-D-GlcNAc-(1-&gt;4)-Mur2Ac(oyl-L-Ala-gamma-D-Glu-L-Lys-D-Ala-D-Ala)-di-trans,octa-cis-undecaprenyl diphosphate + UDP + H(+). It participates in cell wall biogenesis; peptidoglycan biosynthesis. In terms of biological role, cell wall formation. Catalyzes the transfer of a GlcNAc subunit on undecaprenyl-pyrophosphoryl-MurNAc-pentapeptide (lipid intermediate I) to form undecaprenyl-pyrophosphoryl-MurNAc-(pentapeptide)GlcNAc (lipid intermediate II). The chain is UDP-N-acetylglucosamine--N-acetylmuramyl-(pentapeptide) pyrophosphoryl-undecaprenol N-acetylglucosamine transferase from Staphylococcus carnosus (strain TM300).